Reading from the N-terminus, the 203-residue chain is Secreted phosphoprotein 24 (203 aa).

Residues 1-23 (MEQAMLKTLALLVLGMHYWCATG) form the signal peptide. 2 cysteine pairs are disulfide-bonded: C86–C96 and C109–C127. S90 carries the post-translational modification Phosphoserine. S137, S138, S162, S165, and S174 each carry phosphoserine.

The protein belongs to the SPP2 family. Post-translationally, phosphorylation sites are present in the extracellular medium.

It localises to the secreted. Functionally, could coordinate an aspect of bone turnover. The chain is Secreted phosphoprotein 24 (Spp2) from Mus musculus (Mouse).